Here is a 459-residue protein sequence, read N- to C-terminus: VGFKAGVKDYKLTYYTPDYETKDTDILAAFRVTPQPGVPPEEAGAAVAAESSTGTWTTVWTDGLTNLDRYKGRCYHIEPVAGEESQFIAYVAYPLDLFEEGSVTNMFTSIVGNVFGFKALRALRLEDLRIPVAYVKTFQGPPHGIQVERDKLNKYGRPLLGCTIKPKLGLSAKNYGRAVYECLRGGLDFTKDDENVNSQPFMRWRDRFLFCAEALYKAQAETGEIKGHYLNATAGTCEEMLKRAVFARELGVPIVMHDYLTGGFTANTSLAFYCRDNGLLLHIHRAMHAVIDRQKNHGIHFRVLAKALRMSGGDHIHSGTVVGKLEGEREITLGFVDLLRDDFIEKDRSRGIYFTQDWVSLPGVLPVASGGIHVWHMPALTEIFGDDSVLQFGGGTLGHPWGNAPGAVANRVALEACVQARNEGRDLAREGNEIIREACKWSPELAAACEVWKEIKFEF.

Lys4 carries the N6,N6,N6-trimethyllysine modification. Positions 113 and 163 each coordinate substrate. Lys165 (proton acceptor) is an active-site residue. Position 167 (Lys167) interacts with substrate. 3 residues coordinate Mg(2+): Lys191, Asp193, and Glu194. Position 191 is an N6-carboxylysine (Lys191). His284 (proton acceptor) is an active-site residue. Residues Arg285, His317, and Ser369 each contribute to the substrate site.

It belongs to the RuBisCO large chain family. Type I subfamily. As to quaternary structure, heterohexadecamer of 8 large chains and 8 small chains; disulfide-linked. The disulfide link is formed within the large subunit homodimers. The cofactor is Mg(2+). Post-translationally, the disulfide bond which can form in the large chain dimeric partners within the hexadecamer appears to be associated with oxidative stress and protein turnover.

The protein resides in the plastid. Its subcellular location is the chloroplast. The catalysed reaction is 2 (2R)-3-phosphoglycerate + 2 H(+) = D-ribulose 1,5-bisphosphate + CO2 + H2O. The enzyme catalyses D-ribulose 1,5-bisphosphate + O2 = 2-phosphoglycolate + (2R)-3-phosphoglycerate + 2 H(+). Its function is as follows. RuBisCO catalyzes two reactions: the carboxylation of D-ribulose 1,5-bisphosphate, the primary event in carbon dioxide fixation, as well as the oxidative fragmentation of the pentose substrate in the photorespiration process. Both reactions occur simultaneously and in competition at the same active site. The protein is Ribulose bisphosphate carboxylase large chain of Heuchera micrantha (Alum root).